A 38-amino-acid polypeptide reads, in one-letter code: MKVRPSVKPICEYCKVIRRNGRVMVICPANPKHKQRQG.

Belongs to the bacterial ribosomal protein bL36 family.

This chain is Large ribosomal subunit protein bL36 (rpmJ), found in Streptococcus pneumoniae serotype 4 (strain ATCC BAA-334 / TIGR4).